The following is a 327-amino-acid chain: Phenylalanine--tRNA ligase alpha subunit (327 aa).

Glu252 is a binding site for Mg(2+).

Belongs to the class-II aminoacyl-tRNA synthetase family. Phe-tRNA synthetase alpha subunit type 1 subfamily. Tetramer of two alpha and two beta subunits. Mg(2+) serves as cofactor.

Its subcellular location is the cytoplasm. The enzyme catalyses tRNA(Phe) + L-phenylalanine + ATP = L-phenylalanyl-tRNA(Phe) + AMP + diphosphate + H(+). This Escherichia coli O139:H28 (strain E24377A / ETEC) protein is Phenylalanine--tRNA ligase alpha subunit.